The primary structure comprises 262 residues: Cytochrome c oxidase subunit 3 (262 aa).

A run of 6 helical transmembrane segments spans residues 39 to 59 (YTMT…YQWW), 83 to 103 (GMIL…WAFF), 120 to 140 (VGIA…ILLA), 163 to 183 (GLFF…YEYI), 201 to 221 (ATGF…ICFL), and 240 to 260 (AWYW…IYWW).

This sequence belongs to the cytochrome c oxidase subunit 3 family. Component of the cytochrome c oxidase (complex IV, CIV), a multisubunit enzyme composed of a catalytic core of 3 subunits and several supernumerary subunits. The complex exists as a monomer or a dimer and forms supercomplexes (SCs) in the inner mitochondrial membrane with ubiquinol-cytochrome c oxidoreductase (cytochrome b-c1 complex, complex III, CIII).

It localises to the mitochondrion inner membrane. The enzyme catalyses 4 Fe(II)-[cytochrome c] + O2 + 8 H(+)(in) = 4 Fe(III)-[cytochrome c] + 2 H2O + 4 H(+)(out). Its function is as follows. Component of the cytochrome c oxidase, the last enzyme in the mitochondrial electron transport chain which drives oxidative phosphorylation. The respiratory chain contains 3 multisubunit complexes succinate dehydrogenase (complex II, CII), ubiquinol-cytochrome c oxidoreductase (cytochrome b-c1 complex, complex III, CIII) and cytochrome c oxidase (complex IV, CIV), that cooperate to transfer electrons derived from NADH and succinate to molecular oxygen, creating an electrochemical gradient over the inner membrane that drives transmembrane transport and the ATP synthase. Cytochrome c oxidase is the component of the respiratory chain that catalyzes the reduction of oxygen to water. Electrons originating from reduced cytochrome c in the intermembrane space (IMS) are transferred via the dinuclear copper A center (CU(A)) of subunit 2 and heme A of subunit 1 to the active site in subunit 1, a binuclear center (BNC) formed by heme A3 and copper B (CU(B)). The BNC reduces molecular oxygen to 2 water molecules using 4 electrons from cytochrome c in the IMS and 4 protons from the mitochondrial matrix. The polypeptide is Cytochrome c oxidase subunit 3 (COIII) (Anopheles gambiae (African malaria mosquito)).